Reading from the N-terminus, the 123-residue chain is Holo-[acyl-carrier-protein] synthase (123 aa).

Mg(2+)-binding residues include D9 and E57.

The protein belongs to the P-Pant transferase superfamily. AcpS family. The cofactor is Mg(2+).

Its subcellular location is the cytoplasm. The enzyme catalyses apo-[ACP] + CoA = holo-[ACP] + adenosine 3',5'-bisphosphate + H(+). Its function is as follows. Transfers the 4'-phosphopantetheine moiety from coenzyme A to a Ser of acyl-carrier-protein. The sequence is that of Holo-[acyl-carrier-protein] synthase from Streptomyces coelicolor (strain ATCC BAA-471 / A3(2) / M145).